The primary structure comprises 533 residues: Retinoid isomerohydrolase (533 aa).

An N-acetylserine modification is found at Ser2. Residues Thr101 and Thr105 each carry the phosphothreonine modification. The S-palmitoyl cysteine; in membrane form moiety is linked to residue Cys112. Lys113 carries the post-translational modification N6-acetyllysine. Ser117 is subject to Phosphoserine. Residue His180 coordinates Fe cation. A lipid anchor (S-palmitoyl cysteine; in membrane form) is attached at Cys231. Fe cation contacts are provided by His241 and His313. 2 S-palmitoyl cysteine; in membrane form lipidation sites follow: Cys329 and Cys330. His527 contacts Fe cation.

This sequence belongs to the carotenoid oxygenase family. As to quaternary structure, interacts with MYO7A; this mediates light-dependent intracellular transport of RPE65. Requires Fe(2+) as cofactor. In terms of processing, palmitoylation by LRAT regulates ligand binding specificity; the palmitoylated form (membrane form) specifically binds all-trans-retinyl-palmitate, while the soluble unpalmitoylated form binds all-trans-retinol (vitamin A). Retinal pigment epithelium specific.

The protein resides in the cytoplasm. It is found in the cell membrane. Its subcellular location is the microsome membrane. The catalysed reaction is an all-trans-retinyl ester + H2O = 11-cis-retinol + a fatty acid + H(+). It catalyses the reaction lutein = (3R,3'S)-zeaxanthin. The enzyme catalyses all-trans-retinyl hexadecanoate + H2O = 11-cis-retinol + hexadecanoate + H(+). In terms of biological role, critical isomerohydrolase in the retinoid cycle involved in regeneration of 11-cis-retinal, the chromophore of rod and cone opsins. Catalyzes the cleavage and isomerization of all-trans-retinyl fatty acid esters to 11-cis-retinol which is further oxidized by 11-cis retinol dehydrogenase to 11-cis-retinal for use as visual chromophore. Essential for the production of 11-cis retinal for both rod and cone photoreceptors. Also capable of catalyzing the isomerization of lutein to meso-zeaxanthin an eye-specific carotenoid. The soluble form binds vitamin A (all-trans-retinol), making it available for LRAT processing to all-trans-retinyl ester. The membrane form, palmitoylated by LRAT, binds all-trans-retinyl esters, making them available for IMH (isomerohydrolase) processing to all-cis-retinol. The soluble form is regenerated by transferring its palmitoyl groups onto 11-cis-retinol, a reaction catalyzed by LRAT. The polypeptide is Retinoid isomerohydrolase (RPE65) (Chlorocebus aethiops (Green monkey)).